We begin with the raw amino-acid sequence, 240 residues long: UDP-2,3-diacylglucosamine hydrolase (240 aa).

Residues Asp-8, His-10, Asp-41, Asn-79, and His-114 each contribute to the Mn(2+) site. Position 79–80 (Asn-79–Arg-80) interacts with substrate. Asp-122, Ser-160, Asn-164, Lys-167, and His-195 together coordinate substrate. His-195 and His-197 together coordinate Mn(2+).

Belongs to the LpxH family. It depends on Mn(2+) as a cofactor.

The protein resides in the cell inner membrane. It carries out the reaction UDP-2-N,3-O-bis[(3R)-3-hydroxytetradecanoyl]-alpha-D-glucosamine + H2O = 2-N,3-O-bis[(3R)-3-hydroxytetradecanoyl]-alpha-D-glucosaminyl 1-phosphate + UMP + 2 H(+). Its pathway is glycolipid biosynthesis; lipid IV(A) biosynthesis; lipid IV(A) from (3R)-3-hydroxytetradecanoyl-[acyl-carrier-protein] and UDP-N-acetyl-alpha-D-glucosamine: step 4/6. Functionally, hydrolyzes the pyrophosphate bond of UDP-2,3-diacylglucosamine to yield 2,3-diacylglucosamine 1-phosphate (lipid X) and UMP by catalyzing the attack of water at the alpha-P atom. Involved in the biosynthesis of lipid A, a phosphorylated glycolipid that anchors the lipopolysaccharide to the outer membrane of the cell. The chain is UDP-2,3-diacylglucosamine hydrolase from Shigella dysenteriae serotype 1 (strain Sd197).